Reading from the N-terminus, the 417-residue chain is Transmembrane protease serine 11G (417 aa).

Over 1-21 (MYQPGILVRRKRVWKPWTVAL) the chain is Cytoplasmic. A helical; Signal-anchor for type II membrane protein transmembrane segment spans residues 22–42 (ITVALLLALAVLIGLLVYFLV). The Extracellular portion of the chain corresponds to 43-417 (YDEKTHYYQA…RDWIKSKTSI (375 aa)). One can recognise an SEA domain in the interval 46–165 (KTHYYQASFW…PYLREMNAAQ (120 aa)). An N-linked (GlcNAc...) asparagine glycan is attached at N60. Positions 186–416 (IADGKPADKA…YRDWIKSKTS (231 aa)) constitute a Peptidase S1 domain. C211 and C227 form a disulfide bridge. Active-site charge relay system residues include H226 and D271. Disulfide bonds link C336–C352 and C363–C392. S367 (charge relay system) is an active-site residue.

It belongs to the peptidase S1 family.

Its subcellular location is the membrane. The protein is Transmembrane protease serine 11G (Tmprss11g) of Mus musculus (Mouse).